We begin with the raw amino-acid sequence, 358 residues long: 3-isopropylmalate dehydrogenase (358 aa).

77–90 (GPKWTNLPPDQQPE) serves as a coordination point for NAD(+). Substrate contacts are provided by R98, R108, R137, and D226. Mg(2+)-binding residues include D226, D250, and D254. 284-296 (GSAPDIAGKGIAN) is a binding site for NAD(+).

The protein belongs to the isocitrate and isopropylmalate dehydrogenases family. LeuB type 1 subfamily. As to quaternary structure, homodimer. It depends on Mg(2+) as a cofactor. Mn(2+) serves as cofactor.

The protein localises to the cytoplasm. The enzyme catalyses (2R,3S)-3-isopropylmalate + NAD(+) = 4-methyl-2-oxopentanoate + CO2 + NADH. It functions in the pathway amino-acid biosynthesis; L-leucine biosynthesis; L-leucine from 3-methyl-2-oxobutanoate: step 3/4. Functionally, catalyzes the oxidation of 3-carboxy-2-hydroxy-4-methylpentanoate (3-isopropylmalate) to 3-carboxy-4-methyl-2-oxopentanoate. The product decarboxylates to 4-methyl-2 oxopentanoate. In Haemophilus influenzae (strain ATCC 51907 / DSM 11121 / KW20 / Rd), this protein is 3-isopropylmalate dehydrogenase (leuB).